Here is a 290-residue protein sequence, read N- to C-terminus: ATP synthase subunit a (290 aa).

7 helical membrane passes run 54 to 74 (AVHL…ILLF), 115 to 135 (IAPL…LKWI), 136 to 156 (PVDY…KIVP), 164 to 184 (FGLS…VKGF), 201 to 221 (LVPF…LSLA), 233 to 253 (VVFI…NVPW), and 254 to 274 (AIFH…LTVV).

The protein belongs to the ATPase A chain family. As to quaternary structure, F-type ATPases have 2 components, CF(1) - the catalytic core - and CF(0) - the membrane proton channel. CF(1) has five subunits: alpha(3), beta(3), gamma(1), delta(1), epsilon(1). CF(0) has three main subunits: a(1), b(2) and c(9-12). The alpha and beta chains form an alternating ring which encloses part of the gamma chain. CF(1) is attached to CF(0) by a central stalk formed by the gamma and epsilon chains, while a peripheral stalk is formed by the delta and b chains.

The protein localises to the cell inner membrane. Its function is as follows. Key component of the proton channel; it plays a direct role in the translocation of protons across the membrane. In Stutzerimonas stutzeri (strain A1501) (Pseudomonas stutzeri), this protein is ATP synthase subunit a.